The primary structure comprises 272 residues: Indole-3-glycerol phosphate synthase (272 aa).

It belongs to the TrpC family.

It carries out the reaction 1-(2-carboxyphenylamino)-1-deoxy-D-ribulose 5-phosphate + H(+) = (1S,2R)-1-C-(indol-3-yl)glycerol 3-phosphate + CO2 + H2O. It functions in the pathway amino-acid biosynthesis; L-tryptophan biosynthesis; L-tryptophan from chorismate: step 4/5. The polypeptide is Indole-3-glycerol phosphate synthase (Mycolicibacterium paratuberculosis (strain ATCC BAA-968 / K-10) (Mycobacterium paratuberculosis)).